Reading from the N-terminus, the 298-residue chain is uncharacterized protein (298 aa).

It belongs to the glycosyltransferase 2 family.

This is an uncharacterized protein from Mycoplasma genitalium (strain ATCC 33530 / DSM 19775 / NCTC 10195 / G37) (Mycoplasmoides genitalium).